Reading from the N-terminus, the 304-residue chain is Oxygen-dependent coproporphyrinogen-III oxidase (304 aa).

Serine 94 lines the substrate pocket. A divalent metal cation contacts are provided by histidine 98 and histidine 108. Residue histidine 108 is the Proton donor of the active site. Residue 110–112 participates in substrate binding; the sequence is NVR. 2 residues coordinate a divalent metal cation: histidine 147 and histidine 177. An important for dimerization region spans residues 242–277; the sequence is YVEFNLVYDRGTLFGLQTGGRTESILMSMPPLVRWE. Residue 260-262 participates in substrate binding; it reads GGR.

Belongs to the aerobic coproporphyrinogen-III oxidase family. As to quaternary structure, homodimer. A divalent metal cation is required as a cofactor.

It localises to the cytoplasm. The catalysed reaction is coproporphyrinogen III + O2 + 2 H(+) = protoporphyrinogen IX + 2 CO2 + 2 H2O. It participates in porphyrin-containing compound metabolism; protoporphyrin-IX biosynthesis; protoporphyrinogen-IX from coproporphyrinogen-III (O2 route): step 1/1. Functionally, involved in the heme biosynthesis. Catalyzes the aerobic oxidative decarboxylation of propionate groups of rings A and B of coproporphyrinogen-III to yield the vinyl groups in protoporphyrinogen-IX. This Shewanella pealeana (strain ATCC 700345 / ANG-SQ1) protein is Oxygen-dependent coproporphyrinogen-III oxidase.